The following is a 1026-amino-acid chain: HEAT repeat-containing protein 4 (1026 aa).

The disordered stretch occupies residues 135-175 (AVKTESSANPEKKLKKSKPASTVREAPRPLIHHPCMHPDML). HEAT repeat units lie at residues 530 to 568 (LLPA…NIMQ), 724 to 760 (KLMT…QIRD), and 761 to 794 (KMVL…GQVS).

The sequence is that of HEAT repeat-containing protein 4 (HEATR4) from Homo sapiens (Human).